The primary structure comprises 162 residues: NADH-quinone oxidoreductase subunit E (162 aa).

Residues C88, C93, C129, and C133 each coordinate [2Fe-2S] cluster.

It belongs to the complex I 24 kDa subunit family. In terms of assembly, composed of 13 different subunits. Subunits NuoCD, E, F, and G constitute the peripheral sector of the complex. It depends on [2Fe-2S] cluster as a cofactor.

It carries out the reaction a quinone + NADH + 5 H(+)(in) = a quinol + NAD(+) + 4 H(+)(out). Functionally, NDH-1 shuttles electrons from NADH, via FMN and iron-sulfur (Fe-S) centers, to quinones in the respiratory chain. Couples the redox reaction to proton translocation (for every two electrons transferred, four hydrogen ions are translocated across the cytoplasmic membrane), and thus conserves the redox energy in a proton gradient. The protein is NADH-quinone oxidoreductase subunit E (nuoE) of Buchnera aphidicola subsp. Acyrthosiphon pisum (strain APS) (Acyrthosiphon pisum symbiotic bacterium).